Consider the following 124-residue polypeptide: PEP-dependent dihydroxyacetone kinase 1, phosphoryl donor subunit DhaM (124 aa).

The PTS EIIA type-4 domain maps to 4–124; sequence PYGVVIISHS…AANLKTIEIK (121 aa). The active-site Tele-phosphohistidine intermediate is histidine 12.

This sequence belongs to the PEP-utilizing enzyme family. In terms of assembly, homodimer. The dihydroxyacetone kinase complex is composed of a homodimer of DhaM, a homodimer of DhaK and the subunit DhaL.

It is found in the cytoplasm. It catalyses the reaction dihydroxyacetone + phosphoenolpyruvate = dihydroxyacetone phosphate + pyruvate. Its function is as follows. Component of the dihydroxyacetone kinase complex, which is responsible for the phosphoenolpyruvate (PEP)-dependent phosphorylation of dihydroxyacetone. DhaM serves as the phosphoryl donor. Is phosphorylated by phosphoenolpyruvate in an EI- and HPr-dependent reaction, and a phosphorelay system on histidine residues finally leads to phosphoryl transfer to DhaL and dihydroxyacetone. The chain is PEP-dependent dihydroxyacetone kinase 1, phosphoryl donor subunit DhaM from Listeria innocua serovar 6a (strain ATCC BAA-680 / CLIP 11262).